We begin with the raw amino-acid sequence, 90 residues long: Accessory gland-specific peptide 26Ab (90 aa).

The first 21 residues, 1-21, serve as a signal peptide directing secretion; that stretch reads MNYFAVICIFSCICLWQFSDA.

Main cells and secondary cells of the accessory glands of 1 day old virgin males (at protein level). In 5 day old virgin males, only detected in the secondary cells (at protein level). Reappears in the main cells after mating (at protein level). First detected in adult males 3-4 hr after eclosion, levels increase reaching a peak at day 3-5 which is maintained until at least day 10 of adulthood (at protein level). In unmated male adults, levels are maintained for the first 6 days of adulthood and then gradually decrease for at least the next 8 days. No expression in females.

Its subcellular location is the secreted. The protein resides in the extracellular space. It localises to the cytoplasm. Its function is as follows. This protein is transferred from male to female during mating and may affect egglaying and behavior after mating. This Drosophila melanogaster (Fruit fly) protein is Accessory gland-specific peptide 26Ab.